Consider the following 700-residue polypeptide: Tectonic-2 (700 aa).

The signal sequence occupies residues 1-25; that stretch reads MGSLSPLSFLWGLLLLQGVLRPLRG. The Extracellular segment spans residues 26–665; it reads DPVFIPPFIR…YYQGEPRPQC (640 aa). Residues asparagine 76, asparagine 82, asparagine 146, asparagine 156, and asparagine 389 are each glycosylated (N-linked (GlcNAc...) asparagine). The helical transmembrane segment at 666 to 682 threads the bilayer; it reads VAKGLMLLSLLMLAILL. The Cytoplasmic segment spans residues 683–700; it reads RHPWVGMCKAWSSASIQH.

This sequence belongs to the tectonic family. Part of the tectonic-like complex (also named B9 complex).

The protein localises to the membrane. The protein resides in the cytoplasm. Its subcellular location is the cytoskeleton. It localises to the cilium basal body. In terms of biological role, component of the tectonic-like complex, a complex localized at the transition zone of primary cilia and acting as a barrier that prevents diffusion of transmembrane proteins between the cilia and plasma membranes. Required for hedgehog signaling transduction. This chain is Tectonic-2 (Tctn2), found in Rattus norvegicus (Rat).